Reading from the N-terminus, the 619-residue chain is Chaperone protein DnaK (619 aa).

Thr179 carries the phosphothreonine; by autocatalysis modification. Residues 584-619 (QAKAQGAAGPQPGAQAQGQPNDGGKEDVVEAEVVDK) are disordered. Residues 585–605 (AKAQGAAGPQPGAQAQGQPND) are compositionally biased toward low complexity. Over residues 606-619 (GGKEDVVEAEVVDK) the composition is skewed to basic and acidic residues.

The protein belongs to the heat shock protein 70 family.

Acts as a chaperone. This Elusimicrobium minutum (strain Pei191) protein is Chaperone protein DnaK.